The primary structure comprises 106 residues: Large ribosomal subunit protein uL24 (106 aa).

It belongs to the universal ribosomal protein uL24 family. As to quaternary structure, part of the 50S ribosomal subunit.

One of two assembly initiator proteins, it binds directly to the 5'-end of the 23S rRNA, where it nucleates assembly of the 50S subunit. Functionally, one of the proteins that surrounds the polypeptide exit tunnel on the outside of the subunit. This chain is Large ribosomal subunit protein uL24, found in Marinobacter nauticus (strain ATCC 700491 / DSM 11845 / VT8) (Marinobacter aquaeolei).